Reading from the N-terminus, the 1063-residue chain is DNA-directed RNA polymerase subunit beta (1063 aa).

The protein belongs to the RNA polymerase beta chain family. In plastids the minimal PEP RNA polymerase catalytic core is composed of four subunits: alpha, beta, beta', and beta''. When a (nuclear-encoded) sigma factor is associated with the core the holoenzyme is formed, which can initiate transcription.

The protein resides in the plastid. The protein localises to the chloroplast. The catalysed reaction is RNA(n) + a ribonucleoside 5'-triphosphate = RNA(n+1) + diphosphate. Functionally, DNA-dependent RNA polymerase catalyzes the transcription of DNA into RNA using the four ribonucleoside triphosphates as substrates. In Zygnema circumcarinatum (Green alga), this protein is DNA-directed RNA polymerase subunit beta.